A 462-amino-acid chain; its full sequence is MALTRLLLPISILWFCFYSSHTILQKDPLLICVNGDPGFDQRAYPTYFGPILDEFSSIMGFEPSILSLERFNPVGGPETSPDTDISVDDFGARGDGTDDTKAFEKAWKDACSSGSVLIVPENKNYLLKQITFSGPCKSDLRVKIRGTIEASSDQSDWVGHNRKRWIEFEDISNLTLEGGGTSNGNGETWWDSSCKRKKSLPCKSAPTALTFRSCKNLIVSDLSIKDSQKMHLSFDKCQDVIASNLMVTAPEHSPNTDGIHITGTQRIHVMNSVIGTGDDCISIESGSKMVIATNITCGPGHGISIGSLGDRNSEAHVSGVLVDGGNLFDTTNGLRIKTWQGGSGSAKNIKFQNIVMHNVTNPIIIDQYYCDSKDPCPEQESAVKVSNVAYMNIRGTSASEVAVKFDCSKSSPCQGYIVGNINLVGNGGKETTMSCSNIVQGLLREGLSTFLFMKRRVHECSY.

A signal peptide spans 1 to 22 (MALTRLLLPISILWFCFYSSHT). N-linked (GlcNAc...) asparagine glycosylation is present at Asn-173. The active-site Proton donor is Asp-278. Cys-280 and Cys-297 are oxidised to a cystine. N-linked (GlcNAc...) asparagine glycosylation is present at Asn-294. The active site involves His-301. The N-linked (GlcNAc...) asparagine glycan is linked to Asn-358. Cystine bridges form between Cys-407–Cys-413 and Cys-435–Cys-460.

The protein belongs to the glycosyl hydrolase 28 family.

The protein resides in the secreted. The protein localises to the cell wall. The catalysed reaction is (1,4-alpha-D-galacturonosyl)n+m + H2O = (1,4-alpha-D-galacturonosyl)n + (1,4-alpha-D-galacturonosyl)m.. Its function is as follows. Acts in concert with the pectinesterase, in the ripening process. Is involved in cell wall metabolism, specifically in polyuronide degradation. This chain is Polygalacturonase, found in Persea americana (Avocado).